Here is a 414-residue protein sequence, read N- to C-terminus: MSQNKRVVITGMGALSPIGNDVKTTWENALKGVNGIDKITRIDTEPYSVHLAGELKNFNIEDHIDKKEARRMDRFTQYAIVAAREAVKDAQLDINENTADRIGVWIGSGIGGMETFEIAHKQLMDKGPRRVSPFFVPMLIPDMATGQVSIDLGAKGPNGATVTACATGTNSIGEAFKIVQRGDADAMITGGTEAPITHMAIAGFSASRALSTNDDIETACRPFQEGRDGFVMGEGAGILVIESLESAQARGANIYAEIVGYGTTGDAYHITAPAPEGEGGSRAMQAAMDDAGIEPKDVQYLNAHGTSTPVGDLNEVKAIKNTFGEAAKHLKVSSTKSMTGHLLGATGGIEAIFSALSIKDSKVAPTIHAVTPDPECDLDIVPNEAQDLDITYAMSNSLGFGGHNAVLVFKKFEA.

The region spanning 4-411 (NKRVVITGMG…GHNAVLVFKK (408 aa)) is the Ketosynthase family 3 (KS3) domain. Active-site for beta-ketoacyl synthase activity residues include Cys-165, His-304, and His-341.

The protein belongs to the thiolase-like superfamily. Beta-ketoacyl-ACP synthases family.

It carries out the reaction a fatty acyl-[ACP] + malonyl-[ACP] + H(+) = a 3-oxoacyl-[ACP] + holo-[ACP] + CO2. The enzyme catalyses (9Z)-hexadecenoyl-[ACP] + malonyl-[ACP] + H(+) = 3-oxo-(11Z)-octadecenoyl-[ACP] + holo-[ACP] + CO2. The protein operates within lipid metabolism; fatty acid biosynthesis. Functionally, involved in the type II fatty acid elongation cycle. Catalyzes the elongation of a wide range of acyl-ACP by the addition of two carbons from malonyl-ACP to an acyl acceptor. Can efficiently catalyze the conversion of palmitoleoyl-ACP (cis-hexadec-9-enoyl-ACP) to cis-vaccenoyl-ACP (cis-octadec-11-enoyl-ACP), an essential step in the thermal regulation of fatty acid composition. This Staphylococcus aureus (strain MW2) protein is 3-oxoacyl-[acyl-carrier-protein] synthase 2 (fabF).